The following is a 346-amino-acid chain: 3-isopropylmalate dehydrogenase (346 aa).

76 to 87 provides a ligand contact to NAD(+); that stretch reads GPKWTDPNNRPE. Substrate is bound by residues Arg-94, Arg-104, Arg-132, and Asp-217. Mg(2+) is bound by residues Asp-217, Asp-241, and Asp-245. 275 to 287 contributes to the NAD(+) binding site; the sequence is GSAPDIANQDIAN.

It belongs to the isocitrate and isopropylmalate dehydrogenases family. LeuB type 1 subfamily. As to quaternary structure, homodimer. It depends on Mg(2+) as a cofactor. The cofactor is Mn(2+).

It is found in the cytoplasm. The enzyme catalyses (2R,3S)-3-isopropylmalate + NAD(+) = 4-methyl-2-oxopentanoate + CO2 + NADH. Its pathway is amino-acid biosynthesis; L-leucine biosynthesis; L-leucine from 3-methyl-2-oxobutanoate: step 3/4. Its function is as follows. Catalyzes the oxidation of 3-carboxy-2-hydroxy-4-methylpentanoate (3-isopropylmalate) to 3-carboxy-4-methyl-2-oxopentanoate. The product decarboxylates to 4-methyl-2 oxopentanoate. The polypeptide is 3-isopropylmalate dehydrogenase (Staphylococcus saprophyticus subsp. saprophyticus (strain ATCC 15305 / DSM 20229 / NCIMB 8711 / NCTC 7292 / S-41)).